We begin with the raw amino-acid sequence, 346 residues long: Probable choline kinase 1 (346 aa).

Arginine 73, glutamine 210, and aspartate 227 together coordinate ATP.

This sequence belongs to the choline/ethanolamine kinase family. In terms of tissue distribution, expressed in roots. Expressed at low levels in cauline leaves and flowers.

The catalysed reaction is choline + ATP = phosphocholine + ADP + H(+). It participates in phospholipid metabolism; phosphatidylcholine biosynthesis; phosphocholine from choline: step 1/1. Functionally, involved in phospholipid biosynthesis. Catalyzes the first step in phosphatidylcholine biosynthesis. The chain is Probable choline kinase 1 (CK1) from Arabidopsis thaliana (Mouse-ear cress).